A 159-amino-acid polypeptide reads, in one-letter code: Endoribonuclease YbeY (159 aa).

The Zn(2+) site is built by His125, His129, and His135.

The protein belongs to the endoribonuclease YbeY family. It depends on Zn(2+) as a cofactor.

The protein localises to the cytoplasm. Single strand-specific metallo-endoribonuclease involved in late-stage 70S ribosome quality control and in maturation of the 3' terminus of the 16S rRNA. This Lactiplantibacillus plantarum (strain ATCC BAA-793 / NCIMB 8826 / WCFS1) (Lactobacillus plantarum) protein is Endoribonuclease YbeY.